A 419-amino-acid polypeptide reads, in one-letter code: Serine/threonine-protein kinase Kist (419 aa).

The Protein kinase domain maps to 23–303; it reads WQVQSRLGSG…PAEMALCSPF (281 aa). Residues 29–37 and K54 contribute to the ATP site; that span reads LGSGSSASV. Residue D158 is the Proton acceptor of the active site. Residues 323-405 enclose the RRM domain; that stretch reads LRLLNVLDDD…GKFVVATFYP (83 aa).

Belongs to the protein kinase superfamily. Ser/Thr protein kinase family. Interacts with PAM and CDKN1B/p27Kip1. Interacts with stathmin.

It is found in the nucleus. The catalysed reaction is L-seryl-[protein] + ATP = O-phospho-L-seryl-[protein] + ADP + H(+). It carries out the reaction L-threonyl-[protein] + ATP = O-phospho-L-threonyl-[protein] + ADP + H(+). Upon serum stimulation, phosphorylates CDKN1B/p27Kip1, thus controlling CDKN1B subcellular location and cell cycle progression in G1 phase. May be involved in trafficking and/or processing of RNA. In Mus musculus (Mouse), this protein is Serine/threonine-protein kinase Kist (Uhmk1).